A 347-amino-acid polypeptide reads, in one-letter code: RNA 3'-terminal phosphate cyclase (347 aa).

ATP-binding positions include Gln101 and 286-289; that span reads HMAD. Residue His312 is the Tele-AMP-histidine intermediate of the active site.

This sequence belongs to the RNA 3'-terminal cyclase family. Type 1 subfamily.

It is found in the cytoplasm. The enzyme catalyses a 3'-end 3'-phospho-ribonucleotide-RNA + ATP = a 3'-end 2',3'-cyclophospho-ribonucleotide-RNA + AMP + diphosphate. Functionally, catalyzes the conversion of 3'-phosphate to a 2',3'-cyclic phosphodiester at the end of RNA. The mechanism of action of the enzyme occurs in 3 steps: (A) adenylation of the enzyme by ATP; (B) transfer of adenylate to an RNA-N3'P to produce RNA-N3'PP5'A; (C) and attack of the adjacent 2'-hydroxyl on the 3'-phosphorus in the diester linkage to produce the cyclic end product. The biological role of this enzyme is unknown but it is likely to function in some aspects of cellular RNA processing. This is RNA 3'-terminal phosphate cyclase from Pyrobaculum neutrophilum (strain DSM 2338 / JCM 9278 / NBRC 100436 / V24Sta) (Thermoproteus neutrophilus).